The chain runs to 140 residues: Large ribosomal subunit protein bL17 (140 aa).

It belongs to the bacterial ribosomal protein bL17 family. As to quaternary structure, part of the 50S ribosomal subunit. Contacts protein L32.

The chain is Large ribosomal subunit protein bL17 from Rhizorhabdus wittichii (strain DSM 6014 / CCUG 31198 / JCM 15750 / NBRC 105917 / EY 4224 / RW1) (Sphingomonas wittichii).